We begin with the raw amino-acid sequence, 116 residues long: SPbeta prophage-derived uncharacterized protein YomQ (116 aa).

This is SPbeta prophage-derived uncharacterized protein YomQ (yomQ) from Bacillus subtilis (strain 168).